We begin with the raw amino-acid sequence, 119 residues long: Holo-[acyl-carrier-protein] synthase (119 aa).

The Mg(2+) site is built by Asp8 and Glu58.

It belongs to the P-Pant transferase superfamily. AcpS family. Mg(2+) serves as cofactor.

It localises to the cytoplasm. The catalysed reaction is apo-[ACP] + CoA = holo-[ACP] + adenosine 3',5'-bisphosphate + H(+). In terms of biological role, transfers the 4'-phosphopantetheine moiety from coenzyme A to a Ser of acyl-carrier-protein. The chain is Holo-[acyl-carrier-protein] synthase from Bacillus cereus (strain G9842).